The following is a 787-amino-acid chain: Integrin beta-3 (787 aa).

Positions 1-25 are cleaved as a signal peptide; sequence MRTRRPGQLWATLLALGALAGVVVG. Residues 27–717 lie on the Extracellular side of the membrane; it reads SNICTTRGVN…EEPECPKGPD (691 aa). The 47-residue stretch at 29 to 75 folds into the PSI domain; that stretch reads ICTTRGVNSCQQCLAVSPVCAWCSDESLPQNSPRCNLKKNLLKDKCS. Intrachain disulfides connect Cys-30-Cys-48, Cys-38-Cys-460, Cys-41-Cys-63, Cys-51-Cys-74, Cys-202-Cys-209, Cys-257-Cys-298, Cys-399-Cys-411, Cys-431-Cys-458, Cys-462-Cys-482, Cys-473-Cys-485, Cys-487-Cys-496, Cys-498-Cys-528, Cys-511-Cys-526, Cys-520-Cys-531, Cys-533-Cys-546, Cys-548-Cys-569, Cys-553-Cys-567, Cys-561-Cys-572, and Cys-574-Cys-583. Residues 134–376 enclose the VWFA domain; the sequence is DYPVDIYYLM…QLIVDAYGKI (243 aa). Mg(2+)-binding residues include Ser-146 and Ser-148. Ser-148, Asp-151, Asp-152, and Asp-183 together coordinate Ca(2+). Residues 202-209 form a CX3CL1-binding region; sequence CYTMKSTC. The interval 202–209 is involved in CX3CL1-, NRG1-, FGF1- and IGF1-binding; sequence CYTMKSTC. The Ca(2+) site is built by Asn-240, Asp-242, Pro-244, Glu-245, and Asp-276. Glu-245 provides a ligand contact to Mg(2+). A CX3CL1-binding region spans residues 292-312; the sequence is LPNDGRCHIGPDNHYSASTTM. Residues Asn-345 and Asn-396 are each glycosylated (N-linked (GlcNAc...) asparagine). I-EGF domains lie at 462–497, 498–547, 548–584, and 585–624; these read CQAFAQPLSPRCNNGNGTFECGVCRCDQGWLGSMCE, CSEE…KYCE, CDDFSCVRYKGEMCSGHGQCNCGDCVCDSDWTGYYCN, and CTTRTDTCMSTNGLLCSGRGNCECGSCVCVQPGSYGDTCE. Asn-477 is a glycosylation site (N-linked (GlcNAc...) asparagine). Asn-584 carries N-linked (GlcNAc...) asparagine glycosylation. 9 disulfides stabilise this stretch: Cys-585-Cys-608, Cys-592-Cys-606, Cys-600-Cys-611, Cys-613-Cys-623, Cys-626-Cys-629, Cys-633-Cys-680, Cys-639-Cys-660, Cys-642-Cys-656, and Cys-688-Cys-712. N-linked (GlcNAc...) asparagine glycosylation occurs at Asn-679. The helical transmembrane segment at 718–738 threads the bilayer; it reads ILVVLLSVMGAILLIGLATLL. The Cytoplasmic segment spans residues 739-787; it reads IWKLLITIHDRKEFAKFEEERARAKWDTANNPLYKEATSTFTNITYRGT. Thr-766 carries the phosphothreonine modification. A Phosphotyrosine modification is found at Tyr-772. The short motif at 776-782 is the LIR element; it reads TSTFTNI. Thr-778 is subject to Phosphothreonine. Residue Tyr-784 is modified to Phosphotyrosine.

It belongs to the integrin beta chain family. In terms of assembly, heterodimer of an alpha and a beta subunit. Beta-3 (ITGB3) associates with either alpha-IIB (ITGA2B) or alpha-V (ITGAV). Interacts with FLNB and COMP. Interacts with PDIA6 following platelet stimulation. Interacts with SYK; upon activation by ITGB3 promotes platelet adhesion. Interacts with MYO10. Interacts with DAB2. Interacts with FERMT2. Integrin ITGAV:ITGB3 interacts with FBLN5 (via N-terminus). Interacts with EMP2; regulates the levels of the heterodimer ITGA5:ITGB3 integrin expression on the plasma membrane. ITGAV:ITGB3 interacts with CCN3. ITGAV:ITGB3 and ITGA2B:ITGB3 interact with SELP (via C-type lectin domain); the interaction mediates cell-cell interaction and adhesion. ITGAV:ITGB3 interacts with AGRA2. ITGAV:ITGB3 is found in a ternary complex with CX3CR1 and CX3CL1. ITGAV:ITGB3 is found in a ternary complex with NRG1 and ERBB3. ITGAV:ITGB3 is found in a ternary complex with FGF1 and FGFR1. ITGAV:ITGB3 interacts with FGF2; it is likely that FGF2 can simultaneously bind ITGAV:ITGB3 and FGF receptors. ITGAV:ITGB3 binds to IL1B. ITGAV:ITGB3 is found in a ternary complex with IGF1 and IGF1R. ITGAV:ITGB3 interacts with IGF2. ITGAV:ITGB3 interacts with FBN1. ITGAV:ITGB3 interacts with CD9, CD81 and CD151 (via second extracellular domain). Interacts (via the allosteric site (site 2)) with CXCL12 in a CXCR4-independent manner. Interacts with MXRA8/DICAM; the interaction inhibits ITGAV:ITGB3 heterodimer formation. ITGAV:ITGB3 interacts with PTN. Forms a complex with PTPRZ1 and PTN that stimulates endothelial cell migration through ITGB3 Tyr-772 phosphorylation. ITGAV:ITGB3 interacts with SLC6A4. Interacts with SLC6A4 (via C-terminus); this interaction regulates SLC6A4 trafficking. ITGA2B:ITGB3 interacts with PPIA/CYPA; the interaction is ROS and PPIase activity-dependent and is increased in the presence of thrombin. Interacts with tensin TNS3; TNS3 also interacts with PEAK1, thus acting as an adapter molecule to bridge the association of PEAK1 with ITGB3. Interacts with TM4SF19. In terms of processing, phosphorylated on tyrosine residues in response to thrombin-induced platelet aggregation. Probably involved in outside-in signaling.

Its subcellular location is the cell membrane. It is found in the cell projection. The protein localises to the lamellipodium membrane. The protein resides in the cell junction. It localises to the focal adhesion. Its subcellular location is the postsynaptic cell membrane. It is found in the synapse. Integrin alpha-V/beta-3 (ITGAV:ITGB3) is a receptor for cytotactin, fibronectin, laminin, matrix metalloproteinase-2, osteopontin, osteomodulin, prothrombin, thrombospondin, vitronectin and von Willebrand factor. Integrin alpha-IIB/beta-3 (ITGA2B:ITGB3) is a receptor for fibronectin, fibrinogen, plasminogen, prothrombin, thrombospondin and vitronectin. Integrins alpha-IIB/beta-3 and alpha-V/beta-3 recognize the sequence R-G-D in a wide array of ligands. Integrin alpha-IIB/beta-3 recognizes the sequence H-H-L-G-G-G-A-K-Q-A-G-D-V in fibrinogen gamma chain. Following activation integrin alpha-IIB/beta-3 brings about platelet/platelet interaction through binding of soluble fibrinogen. This step leads to rapid platelet aggregation which physically plugs ruptured endothelial surfaces. Fibrinogen binding enhances SELP expression in activated platelets. ITGAV:ITGB3 binds to fractalkine (CX3CL1) and acts as its coreceptor in CX3CR1-dependent fractalkine signaling. ITGAV:ITGB3 binds to NRG1 (via EGF domain) and this binding is essential for NRG1-ERBB signaling. ITGAV:ITGB3 binds to FGF1 and this binding is essential for FGF1 signaling. ITGAV:ITGB3 binds to FGF2 and this binding is essential for FGF2 signaling. ITGAV:ITGB3 binds to IGF1 and this binding is essential for IGF1 signaling. ITGAV:ITGB3 binds to IGF2 and this binding is essential for IGF2 signaling. ITGAV:ITGB3 binds to IL1B and this binding is essential for IL1B signaling. ITGAV:ITGB3 binds to PLA2G2A via a site (site 2) which is distinct from the classical ligand-binding site (site 1) and this induces integrin conformational changes and enhanced ligand binding to site 1. ITGAV:ITGB3 acts as a receptor for fibrillin-1 (FBN1) and mediates R-G-D-dependent cell adhesion to FBN1. In brain, plays a role in synaptic transmission and plasticity. Involved in the regulation of the serotonin neurotransmission, is required to localize to specific compartments within the synapse the serotonin receptor SLC6A4 and for an appropriate reuptake of serotonin. Controls excitatory synaptic strength by regulating GRIA2-containing AMPAR endocytosis, which affects AMPAR abundance and composition. ITGAV:ITGB3 acts as a receptor for CD40LG. ITGAV:ITGB3 acts as a receptor for IBSP and promotes cell adhesion and migration to IBSP. The polypeptide is Integrin beta-3 (Rattus norvegicus (Rat)).